We begin with the raw amino-acid sequence, 284 residues long: 4-diphosphocytidyl-2-C-methyl-D-erythritol kinase (284 aa).

The active site involves lysine 14. 98–108 (PMGGGLGGGSS) is a binding site for ATP. Aspartate 140 is a catalytic residue.

It belongs to the GHMP kinase family. IspE subfamily.

The catalysed reaction is 4-CDP-2-C-methyl-D-erythritol + ATP = 4-CDP-2-C-methyl-D-erythritol 2-phosphate + ADP + H(+). It functions in the pathway isoprenoid biosynthesis; isopentenyl diphosphate biosynthesis via DXP pathway; isopentenyl diphosphate from 1-deoxy-D-xylulose 5-phosphate: step 3/6. Catalyzes the phosphorylation of the position 2 hydroxy group of 4-diphosphocytidyl-2C-methyl-D-erythritol. The sequence is that of 4-diphosphocytidyl-2-C-methyl-D-erythritol kinase from Shewanella sp. (strain MR-4).